The chain runs to 236 residues: Urease accessory protein UreG (236 aa).

The segment at 1–26 is disordered; that stretch reads MHDHSLHSGHDHGLGPGSFHDRGAPH. 42–49 is a binding site for GTP; sequence GPVGSGKT.

The protein belongs to the SIMIBI class G3E GTPase family. UreG subfamily. Homodimer. UreD, UreF and UreG form a complex that acts as a GTP-hydrolysis-dependent molecular chaperone, activating the urease apoprotein by helping to assemble the nickel containing metallocenter of UreC. The UreE protein probably delivers the nickel.

It is found in the cytoplasm. Facilitates the functional incorporation of the urease nickel metallocenter. This process requires GTP hydrolysis, probably effectuated by UreG. In Anaeromyxobacter sp. (strain Fw109-5), this protein is Urease accessory protein UreG.